We begin with the raw amino-acid sequence, 254 residues long: Coproheme decarboxylase (254 aa).

Fe-coproporphyrin III contacts are provided by residues arginine 136, 150 to 154 (YPMDK), histidine 177, glutamine 190, and serine 228. Tyrosine 150 is an active-site residue.

The protein belongs to the ChdC family. Type 1 subfamily. The cofactor is Fe-coproporphyrin III.

It carries out the reaction Fe-coproporphyrin III + 2 H2O2 + 2 H(+) = heme b + 2 CO2 + 4 H2O. The enzyme catalyses Fe-coproporphyrin III + H2O2 + H(+) = harderoheme III + CO2 + 2 H2O. It catalyses the reaction harderoheme III + H2O2 + H(+) = heme b + CO2 + 2 H2O. It functions in the pathway porphyrin-containing compound metabolism; protoheme biosynthesis. Its function is as follows. Involved in coproporphyrin-dependent heme b biosynthesis. Catalyzes the decarboxylation of Fe-coproporphyrin III (coproheme) to heme b (protoheme IX), the last step of the pathway. The reaction occurs in a stepwise manner with a three-propionate harderoheme intermediate. The polypeptide is Coproheme decarboxylase (Bacillus subtilis (strain 168)).